A 2422-amino-acid chain; its full sequence is Interferon-induced very large GTPase 1 (2422 aa).

Residues 945–965 form a disordered region; that stretch reads ENFFEDSDSPTKSSSTEPSPH. Over residues 954–963 the composition is skewed to low complexity; it reads PTKSSSTEPS. The VLIG-type G domain maps to 1479 to 1720; sequence DKRLFVLSIL…KISDVKSRVQ (242 aa). GTP is bound by residues 1489-1496, 1542-1545, and 1619-1622; these read GLQSSGKS, DTEG, and TATD.

The protein belongs to the TRAFAC class dynamin-like GTPase superfamily. Very large inducible GTPase (VLIG) family.

It localises to the cytoplasm. Its subcellular location is the cytosol. The protein localises to the nucleus. The sequence is that of Interferon-induced very large GTPase 1 (GVINP1) from Homo sapiens (Human).